A 726-amino-acid polypeptide reads, in one-letter code: Germacradienol/geosmin synthase (726 aa).

The segment at 2–354 is germacradienol/germacrene D synthase; that stretch reads TQQPFQLPHF…TSAADVGALL (353 aa). The Mg(2+) site is built by Asp-86, Glu-91, Asn-267, Thr-271, Gln-276, Asp-455, Asn-598, Ser-602, and Glu-606. The short motif at 86–91 is the DDXXD motif 1; degenerate element; sequence DDHFLE. A geosmin synthase region spans residues 355–726; sequence ADAVAQRARS…VPRSSPALTH (372 aa). The DDXXD motif 2; degenerate signature appears at 455 to 459; it reads DDYYP.

The protein belongs to the terpene synthase family. Requires Mg(2+) as cofactor.

The enzyme catalyses (2E,6E)-farnesyl diphosphate + H2O = (1E,4S,5E,7R)-germacra-1(10),5-dien-11-ol + diphosphate. It carries out the reaction (1E,4S,5E,7R)-germacra-1(10),5-dien-11-ol + H2O = (-)-geosmin + acetone. It catalyses the reaction (2E,6E)-farnesyl diphosphate = (-)-germacrene D + diphosphate. It participates in secondary metabolite biosynthesis; geosmin biosynthesis. The protein operates within sesquiterpene biosynthesis; germacradienol biosynthesis; germacradienol from farnesyl diphosphate: step 1/1. It functions in the pathway sesquiterpene biosynthesis; germacrene D biosynthesis; germacrene D from farnesyl diphosphate: step 1/1. Functionally, tow-domain protein where the N-terminal domain catalyzes the cyclization of farnesyl diphosphate (FPP) to a 85:15 mixture of the sesquiterpene alcohol germacradienol and the sesquiterpene hydrocarbon germacrene D. The C-terminal domain partially converts the germacradienol formed into geosmin, the characteristic odoriferous ('earthy aroma') constituent of Streptomyces species. The sequence is that of Germacradienol/geosmin synthase (cyc2) from Streptomyces coelicolor (strain ATCC BAA-471 / A3(2) / M145).